Consider the following 215-residue polypeptide: Ribonuclease T (215 aa).

Residues Val20–Phe194 enclose the Exonuclease domain. Positions 23, 25, 181, and 186 each coordinate Mg(2+). His181 (proton donor/acceptor) is an active-site residue.

The protein belongs to the RNase T family. As to quaternary structure, homodimer. The cofactor is Mg(2+).

In terms of biological role, trims short 3' overhangs of a variety of RNA species, leaving a one or two nucleotide 3' overhang. Responsible for the end-turnover of tRNA: specifically removes the terminal AMP residue from uncharged tRNA (tRNA-C-C-A). Also appears to be involved in tRNA biosynthesis. The polypeptide is Ribonuclease T (Citrobacter koseri (strain ATCC BAA-895 / CDC 4225-83 / SGSC4696)).